The following is a 60-amino-acid chain: Cytotoxin 3 (60 aa).

4 disulfides stabilise this stretch: C3-C21, C14-C38, C42-C53, and C54-C59.

It belongs to the three-finger toxin family. Short-chain subfamily. Type IA cytotoxin sub-subfamily. Monomer in solution; Homodimer and oligomer in the presence of negatively charged lipids forming a pore with a size ranging between 20 and 30 Angstroms. As to expression, expressed by the venom gland.

The protein resides in the secreted. The protein localises to the target cell membrane. Functionally, shows cytolytic activity on many different cells by forming pore in lipid membranes. In vivo, increases heart rate or kills the animal by cardiac arrest. In addition, it binds to heparin with high affinity, interacts with Kv channel-interacting protein 1 (KCNIP1) in a calcium-independent manner, and binds to integrin alpha-V/beta-3 (ITGAV/ITGB3) with moderate affinity. The protein is Cytotoxin 3 of Naja annulifera (Banded Egyptian cobra).